Reading from the N-terminus, the 345-residue chain is Phosphoribosylformylglycinamidine cyclo-ligase (345 aa).

This sequence belongs to the AIR synthase family.

It localises to the cytoplasm. The catalysed reaction is 2-formamido-N(1)-(5-O-phospho-beta-D-ribosyl)acetamidine + ATP = 5-amino-1-(5-phospho-beta-D-ribosyl)imidazole + ADP + phosphate + H(+). It participates in purine metabolism; IMP biosynthesis via de novo pathway; 5-amino-1-(5-phospho-D-ribosyl)imidazole from N(2)-formyl-N(1)-(5-phospho-D-ribosyl)glycinamide: step 2/2. The chain is Phosphoribosylformylglycinamidine cyclo-ligase from Tolumonas auensis (strain DSM 9187 / NBRC 110442 / TA 4).